Reading from the N-terminus, the 2517-residue chain is Serine/threonine-protein kinase ATR (2517 aa).

An HEAT repeat occupies 1178-1214 (EPMLEQIVNVLMAGCQHDDSQLQMASAKCLGELGAID). An FAT domain is found at 1509-2066 (LVSRASYNCG…LWMLLPHFKS (558 aa)). The residue at position 1569 (Ser-1569) is a Phosphoserine. Phosphotyrosine is present on Tyr-1570. Position 1573 is a phosphoserine (Ser-1573). The residue at position 1575 (Thr-1575) is a Phosphothreonine. Residues 2184 to 2508 (FQESVLILRS…EATKVDNLAS (325 aa)) form the PI3K/PI4K catalytic domain. The tract at residues 2190-2196 (ILRSAAK) is G-loop. The catalytic loop stretch occupies residues 2360–2368 (GLGDRHGEN). Residues 2380–2404 (HVDFNCLFNQGELLPYPEVVPFRLT) form an activation loop region. Residues 2485–2517 (IPLSTEGQVNFLINEATKVDNLASMYIGWGAFL) enclose the FATC domain.

Belongs to the PI3/PI4-kinase family. ATM subfamily. As to quaternary structure, interacts with mus304. The cofactor is Mn(2+).

It localises to the nucleus. The catalysed reaction is L-seryl-[protein] + ATP = O-phospho-L-seryl-[protein] + ADP + H(+). It catalyses the reaction L-threonyl-[protein] + ATP = O-phospho-L-threonyl-[protein] + ADP + H(+). Its function is as follows. Serine/threonine protein kinase which activates checkpoint signaling upon genotoxic stresses such as ionizing radiation (IR), ultraviolet light (UV), or DNA replication stalling, thereby acting as a DNA damage sensor. Recognizes the substrate consensus sequence [ST]-Q. Phosphorylates various proteins, which collectively inhibits DNA replication and mitosis and promotes DNA repair and recombination. Phosphorylates grp/CHK1. Phosphorylates 'Ser-137' of histone variant H2AX/H2AV at sites of DNA damage, thereby regulating DNA damage response mechanism. Essential for the DNA damage checkpoint in larval imaginal disks and neuroblasts and for the DNA replication checkpoint in the embryo. Also has an essential role during early nuclear divisions in embryos, where it is required to delay mitosis in response to incomplete DNA replication. Also plays an important role during meiosis, where it may monitor double-strand-break repair during meiotic crossing over, to regulate the progression of prophase I, and to enforce metaphase I delay observed at the end of oogenesis. Involved in telomere maintenance and prevention of telomere fusion; potentially functioning downstream of moi/modigliani. This is Serine/threonine-protein kinase ATR (mei-41) from Drosophila melanogaster (Fruit fly).